The primary structure comprises 337 residues: Exopolysaccharide phosphotransferase cps2G (337 aa).

Belongs to the stealth family.

The sequence is that of Exopolysaccharide phosphotransferase cps2G (cps2G) from Lactiplantibacillus plantarum (strain ATCC BAA-793 / NCIMB 8826 / WCFS1) (Lactobacillus plantarum).